The following is a 152-amino-acid chain: Nucleoside diphosphate kinase (152 aa).

Lys-11, Phe-59, Arg-87, Thr-93, Arg-104, and Asn-114 together coordinate ATP. His-117 acts as the Pros-phosphohistidine intermediate in catalysis.

Belongs to the NDK family. In terms of assembly, homotetramer. Requires Mg(2+) as cofactor.

The protein resides in the cytoplasm. It carries out the reaction a 2'-deoxyribonucleoside 5'-diphosphate + ATP = a 2'-deoxyribonucleoside 5'-triphosphate + ADP. The enzyme catalyses a ribonucleoside 5'-diphosphate + ATP = a ribonucleoside 5'-triphosphate + ADP. Major role in the synthesis of nucleoside triphosphates other than ATP. The ATP gamma phosphate is transferred to the NDP beta phosphate via a ping-pong mechanism, using a phosphorylated active-site intermediate. In Prochlorococcus marinus (strain MIT 9301), this protein is Nucleoside diphosphate kinase.